The chain runs to 361 residues: UPF0283 membrane protein mlr0776 (361 aa).

The disordered stretch occupies residues 1–33 (MTAPRKPAAFRIEPEAAPTQETPKARQAELSRK). Positions 23 to 32 (PKARQAELSR) are enriched in basic and acidic residues. The next 2 membrane-spanning stretches (helical) occupy residues 73 to 93 (LFGS…VGLW) and 108 to 128 (LGWL…VILI).

Belongs to the UPF0283 family.

It is found in the cell inner membrane. This is UPF0283 membrane protein mlr0776 from Mesorhizobium japonicum (strain LMG 29417 / CECT 9101 / MAFF 303099) (Mesorhizobium loti (strain MAFF 303099)).